The primary structure comprises 426 residues: Glutamate-1-semialdehyde 2,1-aminomutase (426 aa).

An N6-(pyridoxal phosphate)lysine modification is found at Lys-265.

It belongs to the class-III pyridoxal-phosphate-dependent aminotransferase family. HemL subfamily. As to quaternary structure, homodimer. The cofactor is pyridoxal 5'-phosphate.

The protein localises to the cytoplasm. It carries out the reaction (S)-4-amino-5-oxopentanoate = 5-aminolevulinate. It functions in the pathway porphyrin-containing compound metabolism; protoporphyrin-IX biosynthesis; 5-aminolevulinate from L-glutamyl-tRNA(Glu): step 2/2. The chain is Glutamate-1-semialdehyde 2,1-aminomutase from Actinobacillus pleuropneumoniae serotype 7 (strain AP76).